The primary structure comprises 241 residues: Terpene cyclase pyr4 (241 aa).

The next 7 helical transmembrane spans lie at 20-40 (IADW…LAMI), 49-69 (YGMA…YSVI), 79-99 (AVLT…IKFA), 113-133 (LPWI…ALAA), 141-161 (ANWG…CQLM), 168-188 (GASY…GIFL), and 206-226 (FVTW…TFLW).

This sequence belongs to the paxB family.

It is found in the membrane. The enzyme catalyses 2-oxo-3-[(8S)-epoxy-(2E,6E)-farnesyl]-6-(pyridin-3-yl)-2H-pyran-4-olate + H(+) = deacetylpyripyropene E. It participates in secondary metabolite biosynthesis; terpenoid biosynthesis. Functionally, terpene cyclase; part of the gene cluster that mediates the biosynthesis of pyripyropene A, a specific human acyl-coenzyme A:cholesterol acyltransferase 2 inhibitor. The first step of the pathway is the synthesis of nicotinyl-CoA from nicotinic acid by the nicotinic acid-CoA ligase pyr1. Nicotinyl-CoA is then a substrate of polyketide synthase pyr2 to produce 4-hydroxy-6-(3-pyridinyl)-2H-pyran-2-one (HPPO) which is further prenylated by the polyprenyl transferase pyr6 to yield farnesyl-HPPO. The next steps consist of an epoxidation of farnesyl-HPPO to epoxyfarnesyl-HPPO by FAD-dependent monooxygenase pyr5 and a cyclization of the terpenoid portion by the terpene cyclase pyr4 to yield deacetyl-pyripyropene E. The 2 cytochrome P450 monooxygenases pyr3 and pyr9, and the 2 acetyltransferases pyr7 and pyr8 are involved in the conversion of deacetyl-pyripyropene E into pyripyropene A through several cycles of oxidation and acetylation steps. Pyr7 acetylates deacetyl-pyripyropene E to pyripyropene E which is oxidized to 11-deacetyl-pyripyropene O by pyr3, which is in turn acetylated into pyripyropene O by pyr8. Pyripyropene O is then oxidized to deacetyl-pyripyropene A by pyr9. Deacetyl-pyripyropene A is finally acetylated to pyripyropene A by pyr8. The polypeptide is Terpene cyclase pyr4 (Aspergillus fumigatus (strain ATCC MYA-4609 / CBS 101355 / FGSC A1100 / Af293) (Neosartorya fumigata)).